The following is a 318-amino-acid chain: Ubiquitin-like domain-containing CTD phosphatase 1 (318 aa).

One can recognise a Ubiquitin-like domain in the interval 3 to 81; it reads LPIIVKWGGQ…IMMMGTREES (79 aa). N6-acetyllysine is present on Lys117. The region spanning 133–294 is the FCP1 homology domain; sequence PREGKKLLVL…VKLTQYLKEI (162 aa). Mg(2+) contacts are provided by Asp143, Asp145, and Asp253.

Mg(2+) is required as a cofactor.

Its subcellular location is the nucleus. The catalysed reaction is O-phospho-L-seryl-[protein] + H2O = L-seryl-[protein] + phosphate. It catalyses the reaction O-phospho-L-threonyl-[protein] + H2O = L-threonyl-[protein] + phosphate. Functionally, dephosphorylates 26S nuclear proteasomes, thereby decreasing their proteolytic activity. Recruited to the 19S regulatory particle of the 26S proteasome through its interaction with 19S component PSMD2/RPN1. Once recruited, dephosphorylates 19S component PSMC2/RPT1 which impairs PSMC2 ATPase activity and disrupts 26S proteasome assembly. Has also been reported to stimulate the proteolytic activity of the 26S proteasome. The polypeptide is Ubiquitin-like domain-containing CTD phosphatase 1 (Ublcp1) (Rattus norvegicus (Rat)).